We begin with the raw amino-acid sequence, 273 residues long: Progestin and adipoQ receptor family member 4 (273 aa).

6 helical membrane passes run 52 to 72 (IYTHGLALLGFLVLVPMTMPW), 79 to 99 (GWLGGTHCVACLAPPAGSVLY), 115 to 135 (LLALDMCGVCLVNTLGALPII), 147 to 167 (PAALVGYTVLSGVAGWRALTA), 185 to 205 (LLVFGARGVGLGSGAPGSLPC), and 245 to 265 (LLSVGSILQLHAGVVPDLLWA).

The protein belongs to the ADIPOR family. As to quaternary structure, interacts with CERS2 and CERS5; the interaction regulates CERS2 and CERS5 stabilities and activities and is inhibited in presence of ceramides. In terms of tissue distribution, relatively widely expressed in a range of tissues. Expressed in subcutaneous white adipose tissue.

It localises to the golgi apparatus membrane. Plays a role in maintaining adipose tissue function through the regulation of ceramide levels. Mediates the stability of ceramide synthetases, CERS2 and CERS5, and their activities. The chain is Progestin and adipoQ receptor family member 4 from Homo sapiens (Human).